A 249-amino-acid chain; its full sequence is Thrombin-like enzyme barnettobin (249 aa).

Positions 1–10 (APKELQVSYA) are cleaved as a signal peptide. Positions 11–16 (HKSSEL) are excised as a propeptide. Positions 17-240 (VIGGDECDIN…YPPWIQSIIA (224 aa)) constitute a Peptidase S1 domain. 6 disulfide bridges follow: Cys23-Cys154, Cys41-Cys57, Cys89-Cys247, Cys133-Cys201, Cys165-Cys180, and Cys191-Cys216. Residues His56 and Asp101 each act as charge relay system in the active site. Residues Asn145 and Asn161 are each glycosylated (N-linked (GlcNAc...) asparagine). Catalysis depends on Ser195, which acts as the Charge relay system. An N-linked (GlcNAc...) asparagine glycan is attached at Asn242.

Belongs to the peptidase S1 family. Snake venom subfamily. Monomer. In terms of processing, glycoprotein, contains approx. 52% carbohydrate which could be removed by N-glycosidase. Glycosylation is important, since deglycosylated barnettobin loses its clotting and defibrinogenating effects. Expressed by the venom gland.

It localises to the secreted. Its activity is regulated as follows. Both coagulant and amidolytic activities are inhibited by PMSF. Amidolytic activity is partially inhibited by DTT, chymostatin, SBTI and TLCK, but not by heparin and EDTA. In terms of biological role, thrombin-like snake venom serine protease that releases only fibrinopeptide A from human Aalpha chain of fibrinogen (specific coagulant activity was 251.7 NIH thrombin units/mg). Also shows fibrino(geno)lytic activities in vitro and defibrinogenating effects in vivo. The sequence is that of Thrombin-like enzyme barnettobin from Bothrops barnetti (Barnett's lancehead).